The sequence spans 456 residues: Histidine--tRNA ligase (456 aa).

This sequence belongs to the class-II aminoacyl-tRNA synthetase family. Homodimer.

It is found in the cytoplasm. It catalyses the reaction tRNA(His) + L-histidine + ATP = L-histidyl-tRNA(His) + AMP + diphosphate + H(+). The sequence is that of Histidine--tRNA ligase (hisS) from Borreliella burgdorferi (strain ATCC 35210 / DSM 4680 / CIP 102532 / B31) (Borrelia burgdorferi).